Consider the following 237-residue polypeptide: DNA repair protein RecO (237 aa).

It belongs to the RecO family.

Functionally, involved in DNA repair and RecF pathway recombination. In Rickettsia conorii (strain ATCC VR-613 / Malish 7), this protein is DNA repair protein RecO.